A 460-amino-acid polypeptide reads, in one-letter code: tRNA(Ile)-lysidine synthase (460 aa).

37–42 lines the ATP pocket; the sequence is SGGADS.

It belongs to the tRNA(Ile)-lysidine synthase family.

Its subcellular location is the cytoplasm. It carries out the reaction cytidine(34) in tRNA(Ile2) + L-lysine + ATP = lysidine(34) in tRNA(Ile2) + AMP + diphosphate + H(+). Functionally, ligates lysine onto the cytidine present at position 34 of the AUA codon-specific tRNA(Ile) that contains the anticodon CAU, in an ATP-dependent manner. Cytidine is converted to lysidine, thus changing the amino acid specificity of the tRNA from methionine to isoleucine. In Treponema denticola (strain ATCC 35405 / DSM 14222 / CIP 103919 / JCM 8153 / KCTC 15104), this protein is tRNA(Ile)-lysidine synthase.